We begin with the raw amino-acid sequence, 492 residues long: Aspartyl/glutamyl-tRNA(Asn/Gln) amidotransferase subunit B (492 aa).

This sequence belongs to the GatB/GatE family. GatB subfamily. As to quaternary structure, heterotrimer of A, B and C subunits.

It carries out the reaction L-glutamyl-tRNA(Gln) + L-glutamine + ATP + H2O = L-glutaminyl-tRNA(Gln) + L-glutamate + ADP + phosphate + H(+). The catalysed reaction is L-aspartyl-tRNA(Asn) + L-glutamine + ATP + H2O = L-asparaginyl-tRNA(Asn) + L-glutamate + ADP + phosphate + 2 H(+). Functionally, allows the formation of correctly charged Asn-tRNA(Asn) or Gln-tRNA(Gln) through the transamidation of misacylated Asp-tRNA(Asn) or Glu-tRNA(Gln) in organisms which lack either or both of asparaginyl-tRNA or glutaminyl-tRNA synthetases. The reaction takes place in the presence of glutamine and ATP through an activated phospho-Asp-tRNA(Asn) or phospho-Glu-tRNA(Gln). This chain is Aspartyl/glutamyl-tRNA(Asn/Gln) amidotransferase subunit B, found in Bradyrhizobium sp. (strain BTAi1 / ATCC BAA-1182).